Reading from the N-terminus, the 430-residue chain is GTPase Obg (430 aa).

The region spanning 1-158 (MFVDQVKISL…LDVSLELKLL (158 aa)) is the Obg domain. The segment at 118-145 (KGGRGGRGNSRFATPRNPAPDFSEKGEP) is disordered. Residues 159–329 (ADVGLVGFPS…LLYAIADKLE (171 aa)) form the OBG-type G domain. Residues 165-172 (GFPSVGKS), 190-194 (FTTIK), 212-215 (DLPG), 282-285 (NKMD), and 310-312 (STI) each bind GTP. Residues S172 and T192 each coordinate Mg(2+). The OCT domain maps to 352–430 (KHTPSQDKFT…ILGGEFEFVE (79 aa)).

Belongs to the TRAFAC class OBG-HflX-like GTPase superfamily. OBG GTPase family. As to quaternary structure, monomer. The cofactor is Mg(2+).

Its subcellular location is the cytoplasm. Functionally, an essential GTPase which binds GTP, GDP and possibly (p)ppGpp with moderate affinity, with high nucleotide exchange rates and a fairly low GTP hydrolysis rate. Plays a role in control of the cell cycle, stress response, ribosome biogenesis and in those bacteria that undergo differentiation, in morphogenesis control. The polypeptide is GTPase Obg (Staphylococcus aureus (strain COL)).